Here is an 85-residue protein sequence, read N- to C-terminus: Small ribosomal subunit protein uS17 (85 aa).

It belongs to the universal ribosomal protein uS17 family. Part of the 30S ribosomal subunit.

Its function is as follows. One of the primary rRNA binding proteins, it binds specifically to the 5'-end of 16S ribosomal RNA. The protein is Small ribosomal subunit protein uS17 of Desulforudis audaxviator (strain MP104C).